Here is a 144-residue protein sequence, read N- to C-terminus: MKSFVAKPSTIERKWYVIDATDMVVGRLASEVAKRLRGKHKPTYTPFMDCGDNIIIVNAEKVRFTGNKRNDKVYYWHSRFPGGLKSITADKELSGNHPERVLEKAIKGMLPKNVLGRQMFRKLNVYKGSEHPHTAQQPEELKLG.

Belongs to the universal ribosomal protein uL13 family. Part of the 50S ribosomal subunit.

This protein is one of the early assembly proteins of the 50S ribosomal subunit, although it is not seen to bind rRNA by itself. It is important during the early stages of 50S assembly. The chain is Large ribosomal subunit protein uL13 from Magnetococcus marinus (strain ATCC BAA-1437 / JCM 17883 / MC-1).